A 66-amino-acid polypeptide reads, in one-letter code: Large ribosomal subunit protein bL35 (66 aa).

Positions 1–16 are enriched in basic residues; that stretch reads MPKQKTHRASAKRFKR. A disordered region spans residues 1–21; that stretch reads MPKQKTHRASAKRFKRTGSGG.

This sequence belongs to the bacterial ribosomal protein bL35 family.

This is Large ribosomal subunit protein bL35 from Streptococcus mutans serotype c (strain ATCC 700610 / UA159).